Reading from the N-terminus, the 134-residue chain is Large ribosomal subunit protein eL28 (134 aa).

Ser60 carries the post-translational modification Phosphoserine.

It belongs to the eukaryotic ribosomal protein eL28 family. In terms of assembly, component of the large ribosomal subunit (LSU). Mature yeast ribosomes consist of a small (40S) and a large (60S) subunit. The 40S small subunit contains 1 molecule of ribosomal RNA (18S rRNA) and at least 33 different proteins. The large 60S subunit contains 3 rRNA molecules (25S, 5.8S and 5S rRNA) and at least 46 different proteins.

Its subcellular location is the cytoplasm. Component of the ribosome, a large ribonucleoprotein complex responsible for the synthesis of proteins in the cell. The small ribosomal subunit (SSU) binds messenger RNAs (mRNAs) and translates the encoded message by selecting cognate aminoacyl-transfer RNA (tRNA) molecules. The large subunit (LSU) contains the ribosomal catalytic site termed the peptidyl transferase center (PTC), which catalyzes the formation of peptide bonds, thereby polymerizing the amino acids delivered by tRNAs into a polypeptide chain. The nascent polypeptides leave the ribosome through a tunnel in the LSU and interact with protein factors that function in enzymatic processing, targeting, and the membrane insertion of nascent chains at the exit of the ribosomal tunnel. The polypeptide is Large ribosomal subunit protein eL28 (rpl44) (Schizosaccharomyces pombe (strain 972 / ATCC 24843) (Fission yeast)).